The chain runs to 337 residues: DNA-directed RNA polymerase subunit alpha (337 aa).

An alpha N-terminal domain (alpha-NTD) region spans residues 1–233 (MVREKVRVST…DLFIPFLHAE (233 aa)). The interval 267–337 (IALKSIFIDQ…KAFHNPFTEE (71 aa)) is alpha C-terminal domain (alpha-CTD).

This sequence belongs to the RNA polymerase alpha chain family. In terms of assembly, in plastids the minimal PEP RNA polymerase catalytic core is composed of four subunits: alpha, beta, beta', and beta''. When a (nuclear-encoded) sigma factor is associated with the core the holoenzyme is formed, which can initiate transcription.

Its subcellular location is the plastid. It is found in the chloroplast. It catalyses the reaction RNA(n) + a ribonucleoside 5'-triphosphate = RNA(n+1) + diphosphate. In terms of biological role, DNA-dependent RNA polymerase catalyzes the transcription of DNA into RNA using the four ribonucleoside triphosphates as substrates. This is DNA-directed RNA polymerase subunit alpha from Eucalyptus globulus subsp. globulus (Tasmanian blue gum).